A 496-amino-acid chain; its full sequence is Angiopoietin-2 (496 aa).

Residues 1-18 form the signal peptide; that stretch reads MWQIVFFTLSCDLVLAAA. Asparagine 89, asparagine 119, asparagine 133, asparagine 151, asparagine 240, and asparagine 304 each carry an N-linked (GlcNAc...) asparagine glycan. Positions 166–248 form a coiled coil; sequence STNKLEKQIL…VNNSVLQKQQ (83 aa). Positions 275 to 495 constitute a Fibrinogen C-terminal domain; it reads KEEQISFRDC…ATTMMIRPAD (221 aa). A disulfide bridge connects residues cysteine 284 and cysteine 313. Positions 429, 431, 433, and 435 each coordinate Ca(2+). 2 cysteine pairs are disulfide-bonded: cysteine 433-cysteine 435 and cysteine 437-cysteine 450.

As to quaternary structure, interacts with TEK/TIE2, competing for the same binding site as ANGPT1. Interacts with ITGA5. Interacts with SVEP1/polydom. Interacts with THBD; this interaction significantly inhibits the generation of activated PC and TAFIa/CPB2 by the thrombin/thrombomodulin complex.

It is found in the secreted. Its function is as follows. Binds to TEK/TIE2, competing for the ANGPT1 binding site, and modulating ANGPT1 signaling. Can induce tyrosine phosphorylation of TEK/TIE2 in the absence of ANGPT1. In the absence of angiogenic inducers, such as VEGF, ANGPT2-mediated loosening of cell-matrix contacts may induce endothelial cell apoptosis with consequent vascular regression. In concert with VEGF, it may facilitate endothelial cell migration and proliferation, thus serving as a permissive angiogenic signal. Involved in the regulation of lymphangiogenesis. The sequence is that of Angiopoietin-2 (ANGPT2) from Homo sapiens (Human).